Here is a 159-residue protein sequence, read N- to C-terminus: Small ribosomal subunit protein bS6 (159 aa).

Non-standard amino acids (selenocysteine) are located at Sec46 and Sec52.

The protein belongs to the bacterial ribosomal protein bS6 family.

Its function is as follows. Binds together with bS18 to 16S ribosomal RNA. The sequence is that of Small ribosomal subunit protein bS6 from Desulfotalea psychrophila (strain LSv54 / DSM 12343).